A 509-amino-acid polypeptide reads, in one-letter code: 2,3-bisphosphoglycerate-independent phosphoglycerate mutase (509 aa).

Aspartate 13 and serine 63 together coordinate Mn(2+). Catalysis depends on serine 63, which acts as the Phosphoserine intermediate. Residues histidine 124, 154-155, arginine 186, arginine 192, 261-264, and lysine 335 each bind substrate; these read RD and RPDR. Aspartate 400, histidine 404, aspartate 441, histidine 442, and histidine 459 together coordinate Mn(2+).

Belongs to the BPG-independent phosphoglycerate mutase family. Monomer. Mn(2+) serves as cofactor.

The enzyme catalyses (2R)-2-phosphoglycerate = (2R)-3-phosphoglycerate. It participates in carbohydrate degradation; glycolysis; pyruvate from D-glyceraldehyde 3-phosphate: step 3/5. In terms of biological role, catalyzes the interconversion of 2-phosphoglycerate and 3-phosphoglycerate. The protein is 2,3-bisphosphoglycerate-independent phosphoglycerate mutase of Desulforudis audaxviator (strain MP104C).